Reading from the N-terminus, the 144-residue chain is HISEMIMQIHHTKHHQAYINNLKACTEKLKQAEQANDVAAMNALLPAIKFNGGGHINHTIFWTNMAPSAGGEPAGPVADAITKEFGSFQAFKDKFSTASVGVKGSGWGWLGYCPKNDKLAVATCQNQDPLQLTHGLIPLLGLDV.

Mn(2+)-binding residues include His10, His58, and Asp143.

The protein belongs to the iron/manganese superoxide dismutase family. In terms of assembly, homotetramer. The cofactor is Mn(2+).

The protein localises to the mitochondrion matrix. The enzyme catalyses 2 superoxide + 2 H(+) = H2O2 + O2. Its function is as follows. Destroys superoxide anion radicals which are normally produced within the cells and which are toxic to biological systems. The protein is Superoxide dismutase [Mn], mitochondrial of Palinurus vulgaris (European spiny lobster).